We begin with the raw amino-acid sequence, 256 residues long: MIINRSCLKEFAEKVHFLPSSLTKSDLLTDPFRLHQENELGIYYSPHNEFINRDASLVIAGITPGFSQMKTAYETAAESLLQGGTLEQMAVDTKIAAGFSGSMRHNLITMLDLCGLPQAFGIQSAAKLFGELRHMLHTTSVIKYPVFIQQKNYTGYKPAITHSPILSTYAFGHFPAELNHVTGPALLIPLGKAAETVCETLIRQHSLQNLICLNGFPHPSGANGHRLKQFSKNKEQLERQIRSFAALVDFAIEKRK.

This is an uncharacterized protein from Bacillus subtilis (strain 168).